The chain runs to 101 residues: Urease subunit beta (101 aa).

It belongs to the urease beta subunit family. As to quaternary structure, heterotrimer of UreA (gamma), UreB (beta) and UreC (alpha) subunits. Three heterotrimers associate to form the active enzyme.

It localises to the cytoplasm. It carries out the reaction urea + 2 H2O + H(+) = hydrogencarbonate + 2 NH4(+). It functions in the pathway nitrogen metabolism; urea degradation; CO(2) and NH(3) from urea (urease route): step 1/1. This Paraburkholderia phymatum (strain DSM 17167 / CIP 108236 / LMG 21445 / STM815) (Burkholderia phymatum) protein is Urease subunit beta.